A 247-amino-acid polypeptide reads, in one-letter code: Diglucosylglycerate octanoyltransferase (247 aa).

The protein belongs to the OctT acyltransferase family. Homotetramer.

It catalyses the reaction (2R)-2-O-[alpha-D-glucopyranosyl-(1-&gt;6)-alpha-D-glucopyranosyl]-glycerate + octanoyl-CoA = (2R)-2-O-[6-O-octanoyl-alpha-D-glucopyranosyl-(1-&gt;6)-alpha-D-glucopyranosyl]-glycerate + CoA. Functionally, sugar octanoyltransferase likely involved in the biosynthesis of mycobacterial methylglucose lipopolysaccharide (MGLP). Catalyzes the transfer of an octanoyl group from octanoyl-CoA to the C6 OH of the second glucose in diglucosylglycerate (DGG). DGG is the preferred acceptor, but to a lesser extent, GG (glucosylglycerate) can also be used as substrate. DGG and GG are the two earliest intermediates in MGLP biosynthesis. The sequence is that of Diglucosylglycerate octanoyltransferase from Mycobacterium tuberculosis (strain ATCC 25618 / H37Rv).